Reading from the N-terminus, the 207-residue chain is Large ribosomal subunit protein uL4 (207 aa).

Over residues 45 to 57 the composition is skewed to polar residues; it reads RQGTHSVKNRSTV. The interval 45–77 is disordered; it reads RQGTHSVKNRSTVSGGGRKPWRQKGTGNARQGS.

Belongs to the universal ribosomal protein uL4 family. In terms of assembly, part of the 50S ribosomal subunit.

One of the primary rRNA binding proteins, this protein initially binds near the 5'-end of the 23S rRNA. It is important during the early stages of 50S assembly. It makes multiple contacts with different domains of the 23S rRNA in the assembled 50S subunit and ribosome. In terms of biological role, forms part of the polypeptide exit tunnel. This chain is Large ribosomal subunit protein uL4, found in Oenococcus oeni (strain ATCC BAA-331 / PSU-1).